The following is a 27-amino-acid chain: Alpha-benincasin (27 aa).

Functionally, has weak antifungal activity toward C.comatus and P.piricola but not toward M.arachidicola. Inhibits cell-free translation in rabbit reticulocyte lysate system. The chain is Alpha-benincasin from Benincasa hispida (Wax gourd).